Consider the following 284-residue polypeptide: Bifunctional protein FolD (284 aa).

NADP(+) contacts are provided by residues 166-168 (GAS) and isoleucine 232.

This sequence belongs to the tetrahydrofolate dehydrogenase/cyclohydrolase family. In terms of assembly, homodimer.

The catalysed reaction is (6R)-5,10-methylene-5,6,7,8-tetrahydrofolate + NADP(+) = (6R)-5,10-methenyltetrahydrofolate + NADPH. The enzyme catalyses (6R)-5,10-methenyltetrahydrofolate + H2O = (6R)-10-formyltetrahydrofolate + H(+). The protein operates within one-carbon metabolism; tetrahydrofolate interconversion. Catalyzes the oxidation of 5,10-methylenetetrahydrofolate to 5,10-methenyltetrahydrofolate and then the hydrolysis of 5,10-methenyltetrahydrofolate to 10-formyltetrahydrofolate. This is Bifunctional protein FolD from Shewanella sediminis (strain HAW-EB3).